A 176-amino-acid chain; its full sequence is Translation initiation factor IF-3 (176 aa).

This sequence belongs to the IF-3 family. Monomer.

Its subcellular location is the cytoplasm. Its function is as follows. IF-3 binds to the 30S ribosomal subunit and shifts the equilibrium between 70S ribosomes and their 50S and 30S subunits in favor of the free subunits, thus enhancing the availability of 30S subunits on which protein synthesis initiation begins. The protein is Translation initiation factor IF-3 of Streptococcus pyogenes serotype M18 (strain MGAS8232).